The primary structure comprises 246 residues: CD99 antigen-like protein 2 (246 aa).

Residues 1 to 25 (MVARLTTLLVCLVFSLATLVQRGYG) form the signal peptide. The Extracellular segment spans residues 26 to 160 (DFDDFNLEDA…PGSGAVTDPG (135 aa)). The interval 43–156 (KQSHFSTTTR…SQDDPGSGAV (114 aa)) is disordered. Low complexity-rich tracts occupy residues 49–58 (TTTRRTGTTR) and 71–81 (TTTTTKRPGTT). The segment covering 100 to 109 (DDRNDLDGPK) has biased composition (basic and acidic residues). O-linked (Xyl...) (chondroitin sulfate) serine glycosylation occurs at Ser153. Residues 161–181 (TIAGLVSALAAALLGAVSGYL) traverse the membrane as a helical segment. At 182 to 246 (SYQHRKFCFS…EPLAPERPRI (65 aa)) the chain is on the cytoplasmic side. Residues 223 to 246 (APPVTDSTQHSQPTEPLAPERPRI) form a disordered region. Positions 227-236 (TDSTQHSQPT) are enriched in polar residues.

The protein belongs to the CD99 family. In terms of processing, O-glycosylated. As to expression, expressed predominantly in the ventral medullary surface of the brain, moderate expression in the cerebral cortex and cerebellum. Low expression in lung and kidney. No expression in heart, stomach, intestine and skeletal muscle.

It is found in the cell membrane. The protein localises to the cell junction. It localises to the secreted. In terms of biological role, plays a role in a late step of leukocyte extravasation helping cells to overcome the endothelial basement membrane. Acts at the same site as, but independently of, PECAM1. Homophilic adhesion molecule, but these interactions may not be required for cell aggregation. In Rattus norvegicus (Rat), this protein is CD99 antigen-like protein 2 (Cd99l2).